Consider the following 110-residue polypeptide: uncharacterized protein (110 aa).

This is an uncharacterized protein from Mycobacterium tuberculosis (strain CDC 1551 / Oshkosh).